The chain runs to 259 residues: Dihydroorotate dehydrogenase B (NAD(+)), electron transfer subunit (259 aa).

The FAD-binding FR-type domain maps to 2–102 (MQKQNMIVVN…LGPLGHGFPV (101 aa)). FAD contacts are provided by residues 53–56 (RPIS), 70–72 (LYR), and 77–78 (GT). [2Fe-2S] cluster is bound by residues C221, C226, C229, and C246.

Belongs to the PyrK family. As to quaternary structure, heterotetramer of 2 PyrK and 2 PyrD type B subunits. The cofactor is [2Fe-2S] cluster. It depends on FAD as a cofactor.

It functions in the pathway pyrimidine metabolism; UMP biosynthesis via de novo pathway; orotate from (S)-dihydroorotate (NAD(+) route): step 1/1. In terms of biological role, responsible for channeling the electrons from the oxidation of dihydroorotate from the FMN redox center in the PyrD type B subunit to the ultimate electron acceptor NAD(+). The chain is Dihydroorotate dehydrogenase B (NAD(+)), electron transfer subunit from Bacillus cereus (strain ZK / E33L).